Reading from the N-terminus, the 658-residue chain is UvrABC system protein B (658 aa).

A Helicase ATP-binding domain is found at 25–178 (KSLKNNNHYQ…KNFLLKLVEM (154 aa)). 38-45 (GVTGSGKT) contacts ATP. The short motif at 91–114 (HFDYYQPESYIPRRDLFIEKDSSI) is the Beta-hairpin element. A Helicase C-terminal domain is found at 433–607 (QVQDLFDEIK…ELKLRDDEIR (175 aa)). One can recognise a UVR domain in the interval 623 to 658 (EKIIKELDKKMRECAKNLDFEEAMRLRDEIAKLRTL).

The protein belongs to the UvrB family. As to quaternary structure, forms a heterotetramer with UvrA during the search for lesions. Interacts with UvrC in an incision complex.

The protein resides in the cytoplasm. Its function is as follows. The UvrABC repair system catalyzes the recognition and processing of DNA lesions. A damage recognition complex composed of 2 UvrA and 2 UvrB subunits scans DNA for abnormalities. Upon binding of the UvrA(2)B(2) complex to a putative damaged site, the DNA wraps around one UvrB monomer. DNA wrap is dependent on ATP binding by UvrB and probably causes local melting of the DNA helix, facilitating insertion of UvrB beta-hairpin between the DNA strands. Then UvrB probes one DNA strand for the presence of a lesion. If a lesion is found the UvrA subunits dissociate and the UvrB-DNA preincision complex is formed. This complex is subsequently bound by UvrC and the second UvrB is released. If no lesion is found, the DNA wraps around the other UvrB subunit that will check the other stand for damage. In Helicobacter pylori (strain HPAG1), this protein is UvrABC system protein B.